The following is a 660-amino-acid chain: Cullin-associated NEDD8-dissociated protein 1 homolog (660 aa).

A Glycyl lysine isopeptide (Lys-Gly) (interchain with G-Cter in NEDD8) cross-link involves residue Lys-16. A disordered region spans residues 339 to 364 (TQNENDHGSDNLIDSDDGFGSDNDPE). Acidic residues predominate over residues 351–363 (IDSDDGFGSDNDP).

Interacts with unneddylated cullin CDC53. In terms of processing, neddylated at Lys-16.

In terms of biological role, assembly factor of SCF (SKP1-CUL1-F-box protein) E3 ubiquitin ligase complexes that promotes the exchange of the substrate-recognition F-box subunit in SCF complexes, thereby playing a key role in the cellular repertoire of SCF complexes. Acts as a F-box protein exchange factor. Involved in the aging process. Longevity-assurance protein. The protein is Cullin-associated NEDD8-dissociated protein 1 homolog (LAG2) of Saccharomyces cerevisiae (strain ATCC 204508 / S288c) (Baker's yeast).